We begin with the raw amino-acid sequence, 184 residues long: Probable DNA-directed RNA polymerase subunit delta (184 aa).

An HTH HARE-type domain is found at 14–81; that stretch reads LSMIEVARAI…GENVWALRSW (68 aa). 2 disordered regions span residues 88 to 107 and 118 to 184; these read DEEVNHPEDEEEDDSRKHHK and GDDD…DEDD. Residues 118-164 are compositionally biased toward acidic residues; that stretch reads GDDDIIDYDNDDPEDDDLDAATDDSDDDYSDDDSDYDEDNDDADDVL.

The protein belongs to the RpoE family. RNAP is composed of a core of 2 alpha, a beta and a beta' subunits. The core is associated with a delta subunit and one of several sigma factors.

In terms of biological role, participates in both the initiation and recycling phases of transcription. In the presence of the delta subunit, RNAP displays an increased specificity of transcription, a decreased affinity for nucleic acids, and an increased efficiency of RNA synthesis because of enhanced recycling. This is Probable DNA-directed RNA polymerase subunit delta from Lactobacillus acidophilus (strain ATCC 700396 / NCK56 / N2 / NCFM).